The primary structure comprises 520 residues: Lysine--tRNA ligase (520 aa).

The tract at residues 1–21 (MSDHLIPSIPTPAAAPAAAPA) is disordered. Residues 12–21 (PAAAPAAAPA) are compositionally biased toward low complexity. Mg(2+)-binding residues include E430 and E437.

Belongs to the class-II aminoacyl-tRNA synthetase family. Homodimer. Mg(2+) serves as cofactor.

The protein resides in the cytoplasm. It catalyses the reaction tRNA(Lys) + L-lysine + ATP = L-lysyl-tRNA(Lys) + AMP + diphosphate. The protein is Lysine--tRNA ligase of Variovorax paradoxus (strain S110).